The primary structure comprises 262 residues: Thiazole synthase (262 aa).

The Schiff-base intermediate with DXP role is filled by Lys97. Residues Gly158, 185 to 186, and 207 to 208 contribute to the 1-deoxy-D-xylulose 5-phosphate site; these read AG and NT. A disordered region spans residues 243–262; sequence DKAQASTPTVGQPFWHSAEY.

This sequence belongs to the ThiG family. In terms of assembly, homotetramer. Forms heterodimers with either ThiH or ThiS.

The protein localises to the cytoplasm. The catalysed reaction is [ThiS sulfur-carrier protein]-C-terminal-Gly-aminoethanethioate + 2-iminoacetate + 1-deoxy-D-xylulose 5-phosphate = [ThiS sulfur-carrier protein]-C-terminal Gly-Gly + 2-[(2R,5Z)-2-carboxy-4-methylthiazol-5(2H)-ylidene]ethyl phosphate + 2 H2O + H(+). The protein operates within cofactor biosynthesis; thiamine diphosphate biosynthesis. In terms of biological role, catalyzes the rearrangement of 1-deoxy-D-xylulose 5-phosphate (DXP) to produce the thiazole phosphate moiety of thiamine. Sulfur is provided by the thiocarboxylate moiety of the carrier protein ThiS. In vitro, sulfur can be provided by H(2)S. This Neisseria meningitidis serogroup B (strain ATCC BAA-335 / MC58) protein is Thiazole synthase.